The primary structure comprises 459 residues: Putrescine aminotransferase (459 aa).

Residues 150–151 (GT) and Gln274 contribute to the pyridoxal 5'-phosphate site. N6-(pyridoxal phosphate)lysine is present on Lys300. Thr332 serves as a coordination point for pyridoxal 5'-phosphate.

The protein belongs to the class-III pyridoxal-phosphate-dependent aminotransferase family. Putrescine aminotransferase subfamily. It depends on pyridoxal 5'-phosphate as a cofactor.

It catalyses the reaction an alkane-alpha,omega-diamine + 2-oxoglutarate = an omega-aminoaldehyde + L-glutamate. The enzyme catalyses putrescine + 2-oxoglutarate = 1-pyrroline + L-glutamate + H2O. The catalysed reaction is cadaverine + 2-oxoglutarate = 5-aminopentanal + L-glutamate. It functions in the pathway amine and polyamine degradation; putrescine degradation; 4-aminobutanal from putrescine (transaminase route): step 1/1. Its function is as follows. Catalyzes the aminotransferase reaction from putrescine to 2-oxoglutarate, leading to glutamate and 4-aminobutanal, which spontaneously cyclizes to form 1-pyrroline. This is the first step in one of two pathways for putrescine degradation, where putrescine is converted into 4-aminobutanoate (gamma-aminobutyrate or GABA) via 4-aminobutanal. Also functions as a cadaverine transaminase in a a L-lysine degradation pathway to succinate that proceeds via cadaverine, glutarate and L-2-hydroxyglutarate. This is Putrescine aminotransferase from Klebsiella pneumoniae subsp. pneumoniae (strain ATCC 700721 / MGH 78578).